Here is a 289-residue protein sequence, read N- to C-terminus: Diaminopimelate epimerase (289 aa).

Residues asparagine 13, glutamine 47, and asparagine 67 each contribute to the substrate site. Catalysis depends on cysteine 76, which acts as the Proton donor. Residues glycine 77–asparagine 78, asparagine 167, asparagine 200, and glutamate 218–arginine 219 each bind substrate. The active-site Proton acceptor is the cysteine 227. Glycine 228–threonine 229 serves as a coordination point for substrate.

It belongs to the diaminopimelate epimerase family. Homodimer.

It is found in the cytoplasm. It catalyses the reaction (2S,6S)-2,6-diaminopimelate = meso-2,6-diaminopimelate. It participates in amino-acid biosynthesis; L-lysine biosynthesis via DAP pathway; DL-2,6-diaminopimelate from LL-2,6-diaminopimelate: step 1/1. Its function is as follows. Catalyzes the stereoinversion of LL-2,6-diaminopimelate (L,L-DAP) to meso-diaminopimelate (meso-DAP), a precursor of L-lysine and an essential component of the bacterial peptidoglycan. This is Diaminopimelate epimerase from Burkholderia ambifaria (strain ATCC BAA-244 / DSM 16087 / CCUG 44356 / LMG 19182 / AMMD) (Burkholderia cepacia (strain AMMD)).